A 156-amino-acid polypeptide reads, in one-letter code: Small ribosomal subunit protein uS7 (156 aa).

This sequence belongs to the universal ribosomal protein uS7 family. Part of the 30S ribosomal subunit. Contacts proteins S9 and S11.

One of the primary rRNA binding proteins, it binds directly to 16S rRNA where it nucleates assembly of the head domain of the 30S subunit. Is located at the subunit interface close to the decoding center, probably blocks exit of the E-site tRNA. The protein is Small ribosomal subunit protein uS7 of Maricaulis maris (strain MCS10) (Caulobacter maris).